The sequence spans 596 residues: MSHIRNFSIIAHIDHGKSTLADRFIQMCGGLSAREMEAQVLDSMDLERERGITIKAHSVTLHYKAQDGKTYQLNFIDTPGHVDFTYEVSRSLAACEGALLVVDAGQGVEAQSVANCYTAIEQGLEVMPVLNKMDLPQADPDRVKDEIEKIIGIDATDAVACSAKSGMGVDEVLERLVHTIPAPEGEIDAPLQALIIDSWFDNYLGVVSLVRVRHGRVKKGDKILVKSTGKVHLVDSVGVFTPKHTQTADLKAGEVGFIIASIKDIHGAPVGDTLTLSSTPEVEVLAGFKKIQPQVYAGLFPVSSDDFEDFRDALQKLTLNDSSLQYMPESSDALGFGFRCGFLGMLHMEIIQERLEREYDLDLITTAPSVIYELELKTGETIVVDNPSKLPDVSSVTDFREPIVTATILVPQEHLGNVITLCIEKRGVQRDMQFLGSQVQVRYDMPMNEVVLDFFDRLKSTSRGYASLDYHFDRYQSANLVKLDVLINGDKVDALALIVHRDNAAYKGRALTEKMKELIPRQMFDVAIQAAIGGQIIARTTVKALRKNVLAKCYGGDVSRKKKLLEKQKAGKKRMKQVGNVEIPQEAFLAVLRLDS.

The tr-type G domain occupies 2-184 (SHIRNFSIIA…RLVHTIPAPE (183 aa)). Residues 14–19 (DHGKST) and 131–134 (NKMD) each bind GTP.

This sequence belongs to the TRAFAC class translation factor GTPase superfamily. Classic translation factor GTPase family. LepA subfamily.

The protein localises to the cell inner membrane. It catalyses the reaction GTP + H2O = GDP + phosphate + H(+). Functionally, required for accurate and efficient protein synthesis under certain stress conditions. May act as a fidelity factor of the translation reaction, by catalyzing a one-codon backward translocation of tRNAs on improperly translocated ribosomes. Back-translocation proceeds from a post-translocation (POST) complex to a pre-translocation (PRE) complex, thus giving elongation factor G a second chance to translocate the tRNAs correctly. Binds to ribosomes in a GTP-dependent manner. This Pseudomonas putida (strain GB-1) protein is Elongation factor 4.